We begin with the raw amino-acid sequence, 96 residues long: Large ribosomal subunit protein bL27 (96 aa).

Residues 1–9 (MLRLDLQFF) constitute a propeptide that is removed on maturation.

It belongs to the bacterial ribosomal protein bL27 family. In terms of processing, the N-terminus is cleaved by ribosomal processing cysteine protease Prp.

This chain is Large ribosomal subunit protein bL27, found in Geobacillus kaustophilus (strain HTA426).